A 336-amino-acid polypeptide reads, in one-letter code: Ribosomal RNA large subunit methyltransferase F (336 aa).

Belongs to the methyltransferase superfamily. METTL16/RlmF family.

The protein localises to the cytoplasm. It carries out the reaction adenosine(1618) in 23S rRNA + S-adenosyl-L-methionine = N(6)-methyladenosine(1618) in 23S rRNA + S-adenosyl-L-homocysteine + H(+). Specifically methylates the adenine in position 1618 of 23S rRNA. The polypeptide is Ribosomal RNA large subunit methyltransferase F (Yersinia pestis bv. Antiqua (strain Nepal516)).